Consider the following 341-residue polypeptide: NADH-quinone oxidoreductase subunit H (341 aa).

The next 9 membrane-spanning stretches (helical) occupy residues 4-24, 38-58, 70-90, 115-135, 161-181, 187-207, 239-259, 275-295, and 314-334; these read LVNI…LTYF, PSVV…KLLI, ILFI…WAVI, VGVL…IIAG, IGLI…GEMV, MPFW…ISLL, LFFL…TIFF, IPGL…FIWI, and VFLP…LFTG.

This sequence belongs to the complex I subunit 1 family. In terms of assembly, NDH-1 is composed of 14 different subunits. Subunits NuoA, H, J, K, L, M, N constitute the membrane sector of the complex.

It localises to the cell membrane. The enzyme catalyses a quinone + NADH + 5 H(+)(in) = a quinol + NAD(+) + 4 H(+)(out). Its function is as follows. NDH-1 shuttles electrons from NADH, via FMN and iron-sulfur (Fe-S) centers, to quinones in the respiratory chain. The immediate electron acceptor for the enzyme in this species is believed to be ubiquinone. Couples the redox reaction to proton translocation (for every two electrons transferred, four hydrogen ions are translocated across the cytoplasmic membrane), and thus conserves the redox energy in a proton gradient. This subunit may bind ubiquinone. In Wolbachia pipientis wMel, this protein is NADH-quinone oxidoreductase subunit H.